The following is a 730-amino-acid chain: Denticleless protein homolog (730 aa).

M1 is modified (N-acetylmethionine). WD repeat units follow at residues 47-89 (GVPV…FRKK), 96-135 (AHWN…LIGT), and 138-178 (GHQC…KDGF). Residues 168 to 171 (WDTR) carry the DDB1-binding motif motif. Residues 188-198 (AHNTSDKQTPS) show a composition bias toward polar residues. A disordered region spans residues 188–210 (AHNTSDKQTPSKPKKKQNSKGLA). A Phosphothreonine modification is found at T196. The short motif at 197 to 203 (PSKPKKK) is the Nuclear localization signal element. 4 WD repeats span residues 214-253 (DFQQ…TAYR), 267-308 (SSTR…TSPV), 313-354 (GHQN…QPPT), and 358-398 (GHSQ…EEKP). The DDB1-binding motif signature appears at 243 to 246 (WDLR). The tract at residues 399-443 (GGDKLSTVGWASQKKKESRPGLVTVTSSQSTPAKAPRAKCNPSNS) is disordered. A phosphoserine mark is found at S410 and S426. T464 carries the phosphothreonine; by CDK1 and CDK2 modification. The disordered stretch occupies residues 465 to 498 (PTFSIKTSPAKARSPINRRGSVSSVSPKPPSSFK). S485, S490, S495, and S512 each carry phosphoserine. The residue at position 516 (T516) is a Phosphothreonine. A Phosphoserine modification is found at S557. 2 disordered regions span residues 599–631 (SKDS…YASE) and 644–703 (GEGS…TITP). Phosphoserine is present on residues S676 and S679. A compositionally biased stretch (polar residues) spans 679-689 (SPSSQTPNSRR). T684 and T702 each carry phosphothreonine. S717 carries the phosphoserine modification.

The protein belongs to the WD repeat cdt2 family. As to quaternary structure, component of the DCX(DTL) E3 ubiquitin ligase complex (also called CRL4(CDT2)), at least composed of CUL4 (CUL4A or CUL4B), DDB1, DTL/CDT2 and RBX1. Interacts with CDKN1A. Interacts with DDB1. Interacts with FBXO11; SCF(FBXWO11) controls DTL stability but DCX(DTL) does not control FBXO11 stability. Interacts with CRY1. In terms of processing, ubiquitinated by the anaphase promoting complex/cyclosome (APC/C). Autoubiquitinated through 'Lys-48'-polyubiquitin chains in a PCNA-independent reaction, allowing proteasomal turnover. Polyubiquitinated by SCF(FBXO11) when not phosphorylated, leading to its degradation. A tight regulation of the polyubiquitination by SCF(FBXO11) is involved in the control of different processes such as TGF-beta signaling, cell cycle progression and exit. Post-translationally, phosphorylated at Thr-464 by CDK1/Cyclin-B and CDK2/Cyclin-A but not by CDK2/Cyclin-E, MAPK1 or PLK1. Phosphorylation at Thr-464 inhibits the interaction with FBXO11 and decreases upon cell cycle exit induced by TGF-beta or serum starvation. In terms of tissue distribution, expressed in placenta and testis, very low expression seen in skeletal muscle. Detected in all hematopoietic tissues examined, with highest expression in thymus and bone marrow. A low level detected in the spleen and lymph node, and barely detectable level in the peripheral leukocytes. RA treatment down-regulated the expression in NT2 cell.

Its subcellular location is the nucleus. It localises to the nucleus membrane. The protein resides in the cytoplasm. It is found in the cytoskeleton. The protein localises to the microtubule organizing center. Its subcellular location is the centrosome. It localises to the chromosome. It functions in the pathway protein modification; protein ubiquitination. Its function is as follows. Substrate-specific adapter of a DCX (DDB1-CUL4-X-box) E3 ubiquitin-protein ligase complex required for cell cycle control, DNA damage response and translesion DNA synthesis. The DCX(DTL) complex, also named CRL4(CDT2) complex, mediates the polyubiquitination and subsequent degradation of CDT1, CDKN1A/p21(CIP1), FBH1, KMT5A and SDE2. CDT1 degradation in response to DNA damage is necessary to ensure proper cell cycle regulation of DNA replication. CDKN1A/p21(CIP1) degradation during S phase or following UV irradiation is essential to control replication licensing. KMT5A degradation is also important for a proper regulation of mechanisms such as TGF-beta signaling, cell cycle progression, DNA repair and cell migration. Most substrates require their interaction with PCNA for their polyubiquitination: substrates interact with PCNA via their PIP-box, and those containing the 'K+4' motif in the PIP box, recruit the DCX(DTL) complex, leading to their degradation. In undamaged proliferating cells, the DCX(DTL) complex also promotes the 'Lys-164' monoubiquitination of PCNA, thereby being involved in PCNA-dependent translesion DNA synthesis. The DDB1-CUL4A-DTL E3 ligase complex regulates the circadian clock function by mediating the ubiquitination and degradation of CRY1. The chain is Denticleless protein homolog (DTL) from Homo sapiens (Human).